Here is a 109-residue protein sequence, read N- to C-terminus: Thiosulfate sulfurtransferase GlpE (109 aa).

A Rhodanese domain is found at 17–105 (HQQTAVLVDI…WHRHFPAEVA (89 aa)). Cys-65 functions as the Cysteine persulfide intermediate in the catalytic mechanism.

Belongs to the GlpE family.

The protein resides in the cytoplasm. It carries out the reaction thiosulfate + hydrogen cyanide = thiocyanate + sulfite + 2 H(+). It catalyses the reaction thiosulfate + [thioredoxin]-dithiol = [thioredoxin]-disulfide + hydrogen sulfide + sulfite + 2 H(+). Its function is as follows. Transferase that catalyzes the transfer of sulfur from thiosulfate to thiophilic acceptors such as cyanide or dithiols. May function in a CysM-independent thiosulfate assimilation pathway by catalyzing the conversion of thiosulfate to sulfite, which can then be used for L-cysteine biosynthesis. The chain is Thiosulfate sulfurtransferase GlpE from Klebsiella pneumoniae (strain 342).